Reading from the N-terminus, the 432-residue chain is Adhesin YadA (432 aa).

The N-terminal stretch at 1–25 (MTKDFKISVSAALISALFSSPYAFA) is a signal peptide. Residues 26 to 340 (EEPEDGNDGI…KKAISESNQY (315 aa)) are surface exposed passenger domain. The stretch at 242–263 (VNVAQLKKEMAETLENARKETL) forms a coiled coil. The outer membrane translocation of the passenger domain stretch occupies residues 341–379 (TDHKFSQLDNRLDKLDKRVDKGLASSAALNSLFQPYGVG). The next 4 membrane-spanning stretches (beta stranded) occupy residues 379–389 (GKVNFTAGVGG), 393–404 (SQALAIGSGYRV), 411–417 (KAGVAYA), and 421–432 (NVMYNASFNIEW). Residues 380–432 (KVNFTAGVGGYRSSQALAIGSGYRVNESVALKAGVAYAGSSNVMYNASFNIEW) form a translocator domain region.

This sequence belongs to the autotransporter-2 (AT-2) (TC 1.B.40) family. Homotrimer.

The protein resides in the cell surface. It is found in the cell outer membrane. In terms of biological role, collagen-binding outer membrane protein forming a fibrillar matrix on the bacterial cell surface. Promotes attachment to eukaryotic cells and after invasion, is the major adhesin in infected tissue. Constitutes an alternative uptake pathway under conditions in which invasin synthesis is repressed. This is Adhesin YadA (yadA) from Yersinia pseudotuberculosis serotype I (strain IP32953).